Reading from the N-terminus, the 744-residue chain is Elongation factor G, mitochondrial (744 aa).

Residues 39 to 316 (EKIRNIGISA…AVIDYLPNPG (278 aa)) form the tr-type G domain. GTP contacts are provided by residues 48 to 55 (AHIDSGKT), 115 to 119 (DTPGH), and 169 to 172 (NKLD). The span at 725–735 (VRQYQETQGAS) shows a compositional bias: polar residues. Residues 725-744 (VRQYQETQGASQPDKKKKKN) form a disordered region.

This sequence belongs to the TRAFAC class translation factor GTPase superfamily. Classic translation factor GTPase family. EF-G/EF-2 subfamily.

The protein resides in the mitochondrion. It functions in the pathway protein biosynthesis; polypeptide chain elongation. Mitochondrial GTPase that catalyzes the GTP-dependent ribosomal translocation step during translation elongation. During this step, the ribosome changes from the pre-translocational (PRE) to the post-translocational (POST) state as the newly formed A-site-bound peptidyl-tRNA and P-site-bound deacylated tRNA move to the P and E sites, respectively. Catalyzes the coordinated movement of the two tRNA molecules, the mRNA and conformational changes in the ribosome. Essential during development as it acts as a retrograde signal from mitochondria to the nucleus to slow down cell proliferation if mitochondrial energy output is low. In Drosophila pseudoobscura pseudoobscura (Fruit fly), this protein is Elongation factor G, mitochondrial.